The following is a 614-amino-acid chain: Vitamin B12 transporter BtuB (614 aa).

Residues 1–20 (MIKKASLLTACSVTAFSAWA) form the signal peptide. The TonB box signature appears at 26 to 33 (DTLVVTAN). The region spanning 38-152 (PRSTVLAPTT…IGGVVNIITT (115 aa)) is the TBDR plug domain. Residues Leu-83, Ser-85, Asn-92, and 110-111 (VS) each bind cyanocob(III)alamin. Positions 155 to 614 (HPGTEISAGW…EYTLXGSYTF (460 aa)) constitute a TBDR beta-barrel domain. Transmembrane regions (beta stranded) follow at residues 158–165 (TEISAGWG), 169–178 (YQNYDVSTQQ), and 184–195 (TRVTLLGDYAHT). Ca(2+) is bound by residues Asp-199, Gln-211, Asp-213, and Asp-215. The next 2 beta stranded transmembrane spans lie at 217-227 (FLSKTLYGALE) and 232-248 (DAWS…NRTN). 2 residues coordinate Ca(2+): Tyr-249 and Asp-250. Ala-251 provides a ligand contact to cyanocob(III)alamin. Residue Asp-261 coordinates Ca(2+). The next 14 beta stranded transmembrane spans lie at 263–277 (RKLY…LRYN), 279–296 (ELIK…KDYN), 309–325 (TLDE…NNII), 328–337 (HGNIGAGVDW), 353–369 (YDQR…QQVG), 371–381 (FTFEGAGRSDD), 385–400 (FGRH…WEFI), 403–417 (YRFI…KAPN), 434–443 (KSKQWEGAFE), 449–458 (VNWRISGYRN), 473–490 (YYNE…TANF), 494–509 (PLTH…ARNA), 517–529 (RRAK…QLDW), and 535–550 (DWGI…YDKD). Residue Thr-309 coordinates cyanocob(III)alamin. Arg-517 is a binding site for cyanocob(III)alamin. A cyanocob(III)alamin-binding site is contributed by Tyr-551. 3 consecutive transmembrane segments (beta stranded) span residues 558-572 (TVKM…LAVA), 585-596 (IANLFDKDYETV), and 602-614 (AGRE…SYTF). The short motif at 597-614 (YGYQTAGREYTLXGSYTF) is the TonB C-terminal box element.

Belongs to the TonB-dependent receptor family. BtuB (TC 1.B.14.3.1) subfamily.

It localises to the cell outer membrane. Involved in the active translocation of vitamin B12 (cyanocobalamin) across the outer membrane to the periplasmic space. It derives its energy for transport by interacting with the trans-periplasmic membrane protein TonB. The protein is Vitamin B12 transporter BtuB of Escherichia coli O6:H1 (strain CFT073 / ATCC 700928 / UPEC).